The primary structure comprises 199 residues: Transgelin-2 (199 aa).

The residue at position 2 (Ala2) is an N-acetylalanine. Ser11 is subject to Phosphoserine. N6-acetyllysine occurs at positions 17 and 20. The Calponin-homology (CH) domain occupies 24–136 (PDLEQILIQW…RTLMNLGGLA (113 aa)). Ser163 carries the phosphoserine modification. Residue Lys171 forms a Glycyl lysine isopeptide (Lys-Gly) (interchain with G-Cter in SUMO2) linkage. The stretch at 174–199 (IGLQMGTNRGASQAGMTGYGMPRQIL) is one Calponin-like repeat. Thr180 is modified (phosphothreonine). Arg182 and Arg196 each carry omega-N-methylarginine.

The protein belongs to the calponin family.

This is Transgelin-2 (Tagln2) from Rattus norvegicus (Rat).